Reading from the N-terminus, the 867-residue chain is Cilium assembly protein DZIP1 (867 aa).

Residues 12–203 (MPFQKHVYYP…KANYYQCHFC (192 aa)) are mediates interaction with PCM1. Positions 12 to 367 (MPFQKHVYYP…QDFHNVMQLL (356 aa)) are mediates interaction with GLI3 and localization to the cilium basal body. Positions 154–278 (CDGEQSKKLL…SKEYEMQKTK (125 aa)) are required for interaction with DAZ1. A C2H2-type zinc finger spans residues 198–221 (YQCHFCDKAFMNQAFLQSHIQRRH). Ser226 is modified (phosphoserine; by PLK1). Coiled-coil stretches lie at residues 230 to 340 (YQKN…KSNI), 401 to 445 (TSMI…FTCN), and 568 to 588 (DQLH…EREI). Residues 446 to 617 (PLNSISEPKG…EKALLSSDQC (172 aa)) form a mediates interaction with GDI2 and RAB8A region. 3 stretches are compositionally biased toward polar residues: residues 643–654 (LIRQKAVSTDRT), 671–680 (KSSTITTPPF), and 708–718 (NKGSFGKNTVK). 2 disordered regions span residues 643–768 (LIRQ…GGTN) and 796–867 (SLEE…TSDV). Over residues 722–733 (DGTEGSEIEDTD) the composition is skewed to acidic residues. Residues 807-823 (SGKEQKEPPPAKNEPHF) show a composition bias toward basic and acidic residues. Low complexity predominate over residues 848–859 (SSTLKSSLVTVT).

This sequence belongs to the DZIP C2H2-type zinc-finger protein family. Interacts with DAZ1. Interacts with the BBSome; recruits the BBSome to centriolar satellites of the cilium. Interacts with PCM1; localizes DZIP1 and the associated BBSome to centriolar satellites. Interacts with RAB8A (GDP-bound inactive form); recruits RAB8A to the basal body of the cilium and prevents its inhibition by GDI2. Interacts with GDI2; negatively regulates the interaction of GDI2 with GDP-bound RAB8A. Interacts with GLI3; retains GLI3 within the cytoplasm. Interacts with CEP164. Interacts with IFT88. Phosphorylation at Ser-226 by PLK1 before mitosis prevents interaction with PCM1 and localization to centriolar satellites. Thereby, it negatively regulates the localization of the BBSome to centriolar satellites. As to expression, predominantly expressed in testis (at protein level). Also expressed in fetal brain, adult oocytes and ovary. Expressed in undifferentiated ES cells. In testis, it is specifically expressed in germ cells (at protein level). Expressed in mature germ cells and secondary spermatocytes, while it is weakly or not expressed in primary spermatocytes.

The protein resides in the cytoplasm. Its subcellular location is the cytoskeleton. The protein localises to the cilium basal body. It is found in the microtubule organizing center. It localises to the centrosome. The protein resides in the centriolar satellite. Its subcellular location is the centriole. The protein localises to the nucleus. It is found in the nucleus speckle. Functionally, molecular adapter that recruits protein complexes required for cilium assembly and function to the cilium basal body. At the exit of mitosis, localizes to the basal body and ciliary base of the forming primary cilium where it recruits and activates RAB8A to direct vesicle-mediated transport of proteins to the cilium. Also recruits the BBSome, a complex involved in cilium biogenesis, by bridging it to PCM1 at the centriolar satellites of the cilium. It is also required for the recruitment to the cilium basal body of the intraflagellar transport (IFT) machinery as well as the ciliary appendage proteins CEP164 and NINEIN. Functions as a regulator of Hedgehog signaling both through its role in cilium assembly but also probably through its ability to retain GLI3 within the cytoplasm. It is involved in spermatogenesis through its role in organization of the basal body and assembly of the sperm flagellum. Also indirectly involved in heart development through its function in ciliogenesis. In Homo sapiens (Human), this protein is Cilium assembly protein DZIP1.